Consider the following 341-residue polypeptide: Glycerol-3-phosphate dehydrogenase [NAD(P)+] (341 aa).

Residues S14, F15, R35, and K108 each contribute to the NADPH site. The sn-glycerol 3-phosphate site is built by K108 and G136. A140 lines the NADPH pocket. Positions 191, 244, 254, 255, and 256 each coordinate sn-glycerol 3-phosphate. The active-site Proton acceptor is K191. R255 contacts NADPH. Residues V279 and E281 each contribute to the NADPH site.

This sequence belongs to the NAD-dependent glycerol-3-phosphate dehydrogenase family.

The protein localises to the cytoplasm. The enzyme catalyses sn-glycerol 3-phosphate + NAD(+) = dihydroxyacetone phosphate + NADH + H(+). The catalysed reaction is sn-glycerol 3-phosphate + NADP(+) = dihydroxyacetone phosphate + NADPH + H(+). Its pathway is membrane lipid metabolism; glycerophospholipid metabolism. Its function is as follows. Catalyzes the reduction of the glycolytic intermediate dihydroxyacetone phosphate (DHAP) to sn-glycerol 3-phosphate (G3P), the key precursor for phospholipid synthesis. The sequence is that of Glycerol-3-phosphate dehydrogenase [NAD(P)+] from Pseudomonas fluorescens (strain SBW25).